The following is a 402-amino-acid chain: MSPCGPLNLSLAGEATTCAAPWVPNTSAVPPSGASPALPIFSMTLGAVSNLLALALLAQAAGRLRRRRSAATFLLFVASLLATDLAGHVIPGALVLRLYTAGRAPAGGACHFLGGCMVFFGLCPLLLGCGMAVERCVGVTRPLLHAARVSVARARLALAAVAAVALAVALLPLARVGRYELQYPGTWCFIGLGPPGGWRQALLAGLFASLGLVALLAALVCNTLSGLALLRARWRRRSRRPPPASGPDSRRRWGAHGPRSASASSASSIASASTFFGGSRSSGSARRARAHDVEMVGQLVGIMVVSCICWSPMLVLVALAVGGWSSTSLQRPLFLAVRLASWNQILDPWVYILLRQAVLRQLLRLLPPRAGAKGGPAGLGLTPSAWEASSLRSSRHSGLSHF.

Over 1–35 (MSPCGPLNLSLAGEATTCAAPWVPNTSAVPPSGAS) the chain is Extracellular. 2 N-linked (GlcNAc...) asparagine glycosylation sites follow: asparagine 8 and asparagine 25. A helical membrane pass occupies residues 36 to 62 (PALPIFSMTLGAVSNLLALALLAQAAG). Residues 63–72 (RLRRRRSAAT) lie on the Cytoplasmic side of the membrane. Residues 73 to 96 (FLLFVASLLATDLAGHVIPGALVL) form a helical membrane-spanning segment. Residues 97 to 111 (RLYTAGRAPAGGACH) are Extracellular-facing. The cysteines at positions 110 and 188 are disulfide-linked. The helical transmembrane segment at 112–133 (FLGGCMVFFGLCPLLLGCGMAV) threads the bilayer. The Cytoplasmic segment spans residues 134–155 (ERCVGVTRPLLHAARVSVARAR). Residues 156 to 177 (LALAAVAAVALAVALLPLARVG) traverse the membrane as a helical segment. Residues 178–201 (RYELQYPGTWCFIGLGPPGGWRQA) are Extracellular-facing. A helical transmembrane segment spans residues 202-227 (LLAGLFASLGLVALLAALVCNTLSGL). Topologically, residues 228–294 (ALLRARWRRR…ARRARAHDVE (67 aa)) are cytoplasmic. The disordered stretch occupies residues 238–266 (SRRPPPASGPDSRRRWGAHGPRSASASSA). The chain crosses the membrane as a helical span at residues 295–321 (MVGQLVGIMVVSCICWSPMLVLVALAV). The Extracellular segment spans residues 322 to 332 (GGWSSTSLQRP). A helical transmembrane segment spans residues 333–354 (LFLAVRLASWNQILDPWVYILL). Residues 355–402 (RQAVLRQLLRLLPPRAGAKGGPAGLGLTPSAWEASSLRSSRHSGLSHF) lie on the Cytoplasmic side of the membrane.

Belongs to the G-protein coupled receptor 1 family. Post-translationally, phosphorylated. Abundant in kidney. Lower level expression in lung, skeletal muscle and spleen, lowest expression in testis and not detected in liver brain and heart.

The protein resides in the cell membrane. In terms of biological role, receptor for prostaglandin E2 (PGE2). The activity of this receptor is mediated by G(q) proteins which activate a phosphatidylinositol-calcium second messenger system. May play a role as an important modulator of renal function. Implicated the smooth muscle contractile response to PGE2 in various tissues. The chain is Prostaglandin E2 receptor EP1 subtype (PTGER1) from Homo sapiens (Human).